The primary structure comprises 183 residues: Putative 3-methyladenine DNA glycosylase (183 aa).

This sequence belongs to the DNA glycosylase MPG family.

This Wolbachia pipientis subsp. Culex pipiens (strain wPip) protein is Putative 3-methyladenine DNA glycosylase.